A 393-amino-acid polypeptide reads, in one-letter code: Lipid-A-disaccharide synthase (393 aa).

This sequence belongs to the LpxB family.

It carries out the reaction a lipid X + a UDP-2-N,3-O-bis[(3R)-3-hydroxyacyl]-alpha-D-glucosamine = a lipid A disaccharide + UDP + H(+). It participates in bacterial outer membrane biogenesis; LPS lipid A biosynthesis. In terms of biological role, condensation of UDP-2,3-diacylglucosamine and 2,3-diacylglucosamine-1-phosphate to form lipid A disaccharide, a precursor of lipid A, a phosphorylated glycolipid that anchors the lipopolysaccharide to the outer membrane of the cell. The polypeptide is Lipid-A-disaccharide synthase (Bordetella bronchiseptica (strain ATCC BAA-588 / NCTC 13252 / RB50) (Alcaligenes bronchisepticus)).